A 41-amino-acid chain; its full sequence is Large ribosomal subunit protein bL36 (41 aa).

Belongs to the bacterial ribosomal protein bL36 family.

The chain is Large ribosomal subunit protein bL36 from Granulibacter bethesdensis (strain ATCC BAA-1260 / CGDNIH1).